Here is a 367-residue protein sequence, read N- to C-terminus: MPNQHILLSSNLLPVGSNISTWWNFGSMLLTCLILQTSTGFFLAIHYTANINLAFSSVIHILRDVPYGWIMQNTHAIGASMFFICIYIHIARGLYYGLYLNKKVWLSGTALLIILMATAFFGYVLPWGQMSFWAATVITNLLTAIPYLGVTLTTWLWGGFSINDPTLTRFFALHFILPFLIISLSSIHIILLHNEGSNNPLGTNPDIDKIPFHPYHSYKDVLMVTIMITILFTIMSFTPNLFNDPENFSKANPLVTPQHIKPEWYFLFAYGILRSIPNKLGGTLALLMSVIILTTAPFTHTSNVRSMTFRPLTQALFWTLIVTFITITWTATKPVEPPFIFISQMASAIYFSFFIINPILGWTENKL.

A run of 4 helical transmembrane segments spans residues Phe-25 to Ile-45, Trp-69 to Ile-90, Trp-105 to Leu-125, and Phe-170 to Ile-190. Residues His-75 and His-89 each contribute to the heme b site. Heme b contacts are provided by His-174 and His-188. His-193 is an a ubiquinone binding site. A run of 4 helical transmembrane segments spans residues Tyr-218–Thr-238, Leu-280–His-300, Leu-312–Thr-332, and Phe-339–Pro-358.

Belongs to the cytochrome b family. As to quaternary structure, the cytochrome bc1 complex contains 3 respiratory subunits (MT-CYB, CYC1 and UQCRFS1), 2 core proteins (UQCRC1 and UQCRC2) and probably 6 low-molecular weight proteins. Heme b serves as cofactor.

It localises to the mitochondrion inner membrane. In terms of biological role, component of the ubiquinol-cytochrome c reductase complex (complex III or cytochrome b-c1 complex) that is part of the mitochondrial respiratory chain. The b-c1 complex mediates electron transfer from ubiquinol to cytochrome c. Contributes to the generation of a proton gradient across the mitochondrial membrane that is then used for ATP synthesis. The protein is Cytochrome b (MT-CYB) of Austrelaps superbus (Lowland copperhead snake).